A 1082-amino-acid polypeptide reads, in one-letter code: Carbamoyl phosphate synthase large chain (1082 aa).

A carboxyphosphate synthetic domain region spans residues 1 to 401 (MPKDKALKKV…ALLKAVRSLE (401 aa)). Positions 129, 169, 175, 176, 208, 210, 215, 241, 242, 243, 284, and 298 each coordinate ATP. The ATP-grasp 1 domain maps to 133–327 (KNMCLEIGEP…IAKVATKVAV (195 aa)). 3 residues coordinate Mg(2+): Q284, E298, and N300. Residues Q284, E298, and N300 each contribute to the Mn(2+) site. Residues 402-561 (TGVTGMNLPE…YSTYEDEDEA (160 aa)) are oligomerization domain. The tract at residues 562–944 (EPQAVRKVVV…ALYKACLSAG (383 aa)) is carbamoyl phosphate synthetic domain. The region spanning 686–876 (DQLVAELGIP…MVNLATRICL (191 aa)) is the ATP-grasp 2 domain. ATP is bound by residues R722, K761, L763, E767, G792, I793, H794, S795, Q835, and E847. Positions 835, 847, and 849 each coordinate Mg(2+). Residues Q835, E847, and N849 each contribute to the Mn(2+) site. The region spanning 945 to 1082 (YTLPSSGKAV…PLIPLQEYVS (138 aa)) is the MGS-like domain. The allosteric domain stretch occupies residues 945–1082 (YTLPSSGKAV…PLIPLQEYVS (138 aa)).

The protein belongs to the CarB family. As to quaternary structure, composed of two chains; the small (or glutamine) chain promotes the hydrolysis of glutamine to ammonia, which is used by the large (or ammonia) chain to synthesize carbamoyl phosphate. Tetramer of heterodimers (alpha,beta)4. Mg(2+) serves as cofactor. Requires Mn(2+) as cofactor.

It carries out the reaction hydrogencarbonate + L-glutamine + 2 ATP + H2O = carbamoyl phosphate + L-glutamate + 2 ADP + phosphate + 2 H(+). The catalysed reaction is hydrogencarbonate + NH4(+) + 2 ATP = carbamoyl phosphate + 2 ADP + phosphate + 2 H(+). The protein operates within amino-acid biosynthesis; L-arginine biosynthesis; carbamoyl phosphate from bicarbonate: step 1/1. It participates in pyrimidine metabolism; UMP biosynthesis via de novo pathway; (S)-dihydroorotate from bicarbonate: step 1/3. Large subunit of the glutamine-dependent carbamoyl phosphate synthetase (CPSase). CPSase catalyzes the formation of carbamoyl phosphate from the ammonia moiety of glutamine, carbonate, and phosphate donated by ATP, constituting the first step of 2 biosynthetic pathways, one leading to arginine and/or urea and the other to pyrimidine nucleotides. The large subunit (synthetase) binds the substrates ammonia (free or transferred from glutamine from the small subunit), hydrogencarbonate and ATP and carries out an ATP-coupled ligase reaction, activating hydrogencarbonate by forming carboxy phosphate which reacts with ammonia to form carbamoyl phosphate. The sequence is that of Carbamoyl phosphate synthase large chain from Desulforudis audaxviator (strain MP104C).